Consider the following 443-residue polypeptide: Trigger factor (443 aa).

Residues 164–249 enclose the PPIase FKBP-type domain; that stretch reads GDVLCVDFVG…AKSLKKAVDP (86 aa).

It belongs to the FKBP-type PPIase family. Tig subfamily.

It is found in the cytoplasm. It carries out the reaction [protein]-peptidylproline (omega=180) = [protein]-peptidylproline (omega=0). Involved in protein export. Acts as a chaperone by maintaining the newly synthesized protein in an open conformation. Functions as a peptidyl-prolyl cis-trans isomerase. The polypeptide is Trigger factor (Gluconobacter oxydans (strain 621H) (Gluconobacter suboxydans)).